A 62-amino-acid chain; its full sequence is MPKMKTKSALKKRIKVTATGKVIREQAYRSHLAQNKTTKQKRQSRKSAQMHSSDLKRFKALI.

A disordered region spans residues 31 to 62 (HLAQNKTTKQKRQSRKSAQMHSSDLKRFKALI). Residues 53-62 (SDLKRFKALI) are compositionally biased toward basic and acidic residues.

Belongs to the bacterial ribosomal protein bL35 family.

This Mycoplasmopsis agalactiae (strain NCTC 10123 / CIP 59.7 / PG2) (Mycoplasma agalactiae) protein is Large ribosomal subunit protein bL35.